We begin with the raw amino-acid sequence, 549 residues long: Cation/acetate symporter ActP (549 aa).

13 helical membrane passes run 33 to 53 (WQAIIMFLIFVVFTLGITYWA), 77 to 97 (LAIAGDYMSAASFLGISALVF), 103 to 123 (GLIYSLGFLVGWPIILFLIAE), 148 to 168 (ILSACGSLVVVALYLIAQMVG), 183 to 203 (IAVVLVGVLMMMYVLFGGMLA), 206 to 226 (WVQIIKAVLLLFGASFMAFMV), 262 to 282 (ISALSLGLGLMFGTAGLPHIL), 303 to 323 (GFMGYFYILTFIIGFGAIMLV), 355 to 375 (LFLGFISAVAFATILAVVAGL), 404 to 424 (VSKITVLVLGVIAIILGVLFE), 428 to 448 (IAFMVGLAFAIAASCNFPIIL), 464 to 484 (GGWLGLLTAVVLMILGPTIWV), and 493 to 513 (IFPYEYPALFSISVAFLGIWF).

It belongs to the sodium:solute symporter (SSF) (TC 2.A.21) family.

Its subcellular location is the cell inner membrane. In terms of biological role, transports acetate. In Salmonella arizonae (strain ATCC BAA-731 / CDC346-86 / RSK2980), this protein is Cation/acetate symporter ActP.